The chain runs to 100 residues: uncharacterized protein (100 aa).

This is an uncharacterized protein from Archaeoglobus fulgidus (strain ATCC 49558 / DSM 4304 / JCM 9628 / NBRC 100126 / VC-16).